The following is a 430-amino-acid chain: Adenylosuccinate synthetase (430 aa).

Residues 12-18 and 40-42 each bind GTP; these read GDEGKGK and GHT. The active-site Proton acceptor is the D13. Residues D13 and G40 each coordinate Mg(2+). IMP-binding positions include 13–16, 38–41, T128, R142, Q223, T238, and R302; these read DEGK and NAGH. The active-site Proton donor is the H41. A substrate-binding site is contributed by 298–304; it reads TTTGRPR. Residues R304, 330–332, and 412–414 contribute to the GTP site; these read SID and SVG.

Belongs to the adenylosuccinate synthetase family. In terms of assembly, homodimer. Requires Mg(2+) as cofactor.

It localises to the cytoplasm. The catalysed reaction is IMP + L-aspartate + GTP = N(6)-(1,2-dicarboxyethyl)-AMP + GDP + phosphate + 2 H(+). The protein operates within purine metabolism; AMP biosynthesis via de novo pathway; AMP from IMP: step 1/2. In terms of biological role, plays an important role in the de novo pathway of purine nucleotide biosynthesis. Catalyzes the first committed step in the biosynthesis of AMP from IMP. The protein is Adenylosuccinate synthetase of Streptococcus pyogenes serotype M1.